The primary structure comprises 480 residues: Transmembrane protein 161A (480 aa).

The signal sequence occupies residues 1–28 (MAVLGVQLVVTLFTATLMHRLAPHCSFA). Over 29–98 (RWLLCNGSLF…LTAVDALVLR (70 aa)) the chain is Extracellular. Asn-34 is a glycosylation site (N-linked (GlcNAc...) asparagine). The helical transmembrane segment at 99–119 (FFLEYQWFVDFAVYSVGVYLF) threads the bilayer. Over 120–134 (TEAYYFVLGPVQETN) the chain is Cytoplasmic. A helical membrane pass occupies residues 135-155 (IAVFWCLLTLAFSLKVFLMVT). The Extracellular segment spans residues 156 to 166 (RLYFSTKEGGE). A helical membrane pass occupies residues 167 to 187 (RSVCLSFAFLFLLLAMLVQVV). Over 188–224 (REETLELGLEPGLASMTQHLEPILKKQDWDWTLPVIK) the chain is Cytoplasmic. The chain crosses the membrane as a helical span at residues 225–245 (LAIRLGLAVLGSLLGAFLIFP). Over 246–263 (GLRLAQTHQDALTLSADR) the chain is Extracellular. A helical membrane pass occupies residues 264-284 (PLLQLLLHTSFLSPLCTLWLW). Topologically, residues 285 to 304 (TKPVARDFLYQAPTRNMTFS) are cytoplasmic. A helical transmembrane segment spans residues 305–325 (VPSEGAFDSLRLWVLVALCLL). Residues 326–370 (RLAVTRPHLQAYLCLAKARVEQLRKEAGRIEAREIQQRVVRVYCY) lie on the Extracellular side of the membrane. Residues 371–391 (VTVVSLQYLTPLILTLHCTLL) form a helical membrane-spanning segment. Residues 392 to 450 (LKTLGGYSWALSSTPPPLAPSQPSEALIPVDPAGDEAQQTAAQVAGILGGLLTPLFLRG) lie on the Cytoplasmic side of the membrane. A helical transmembrane segment spans residues 451–473 (MLAYIIWWTAACQLLSSLFGLYF). Over 474–480 (HQHLAAS) the chain is Extracellular.

This sequence belongs to the TMEM161 family.

Its subcellular location is the membrane. Functionally, may play a role in protection against oxidative stress. Overexpression leads to reduced levels of oxidant-induced DNA damage and apoptosis. This is Transmembrane protein 161A (Tmem161a) from Mus musculus (Mouse).